The chain runs to 302 residues: uncharacterized protein (302 aa).

A run of 9 helical transmembrane segments spans residues V10 to G30, L65 to L85, V102 to G122, I130 to I150, A162 to L182, I190 to L210, L224 to L244, F251 to I271, and S282 to L302.

Belongs to the auxin efflux carrier (TC 2.A.69) family.

Its subcellular location is the cell membrane. This is an uncharacterized protein from Methanothermobacter thermautotrophicus (strain ATCC 29096 / DSM 1053 / JCM 10044 / NBRC 100330 / Delta H) (Methanobacterium thermoautotrophicum).